Reading from the N-terminus, the 364-residue chain is Phosphoserine aminotransferase (364 aa).

Arg-41 contributes to the L-glutamate binding site. Pyridoxal 5'-phosphate-binding positions include 75–76 (AS), Trp-100, Thr-155, Asp-175, and Gln-198. Residue Lys-199 is modified to N6-(pyridoxal phosphate)lysine. Pyridoxal 5'-phosphate is bound at residue 239–240 (NT).

The protein belongs to the class-V pyridoxal-phosphate-dependent aminotransferase family. SerC subfamily. Homodimer. Requires pyridoxal 5'-phosphate as cofactor.

Its subcellular location is the cytoplasm. The catalysed reaction is O-phospho-L-serine + 2-oxoglutarate = 3-phosphooxypyruvate + L-glutamate. It catalyses the reaction 4-(phosphooxy)-L-threonine + 2-oxoglutarate = (R)-3-hydroxy-2-oxo-4-phosphooxybutanoate + L-glutamate. Its pathway is amino-acid biosynthesis; L-serine biosynthesis; L-serine from 3-phospho-D-glycerate: step 2/3. Functionally, catalyzes the reversible conversion of 3-phosphohydroxypyruvate to phosphoserine and of 3-hydroxy-2-oxo-4-phosphonooxybutanoate to phosphohydroxythreonine. In Streptococcus thermophilus (strain CNRZ 1066), this protein is Phosphoserine aminotransferase.